The following is a 202-amino-acid chain: ATP-dependent Clp protease proteolytic subunit (202 aa).

S106 (nucleophile) is an active-site residue. The active site involves H131.

The protein belongs to the peptidase S14 family. As to quaternary structure, fourteen ClpP subunits assemble into 2 heptameric rings which stack back to back to give a disk-like structure with a central cavity, resembling the structure of eukaryotic proteasomes.

It is found in the cytoplasm. It catalyses the reaction Hydrolysis of proteins to small peptides in the presence of ATP and magnesium. alpha-casein is the usual test substrate. In the absence of ATP, only oligopeptides shorter than five residues are hydrolyzed (such as succinyl-Leu-Tyr-|-NHMec, and Leu-Tyr-Leu-|-Tyr-Trp, in which cleavage of the -Tyr-|-Leu- and -Tyr-|-Trp bonds also occurs).. Cleaves peptides in various proteins in a process that requires ATP hydrolysis. Has a chymotrypsin-like activity. Plays a major role in the degradation of misfolded proteins. The sequence is that of ATP-dependent Clp protease proteolytic subunit from Shewanella sp. (strain ANA-3).